The chain runs to 611 residues: Dihydroxy-acid dehydratase (611 aa).

Aspartate 81 is a Mg(2+) binding site. Cysteine 122 contributes to the [2Fe-2S] cluster binding site. The Mg(2+) site is built by aspartate 123 and lysine 124. An N6-carboxylysine modification is found at lysine 124. Residue cysteine 195 coordinates [2Fe-2S] cluster. Glutamate 491 is a binding site for Mg(2+). Catalysis depends on serine 517, which acts as the Proton acceptor.

Belongs to the IlvD/Edd family. Homodimer. [2Fe-2S] cluster is required as a cofactor. Requires Mg(2+) as cofactor.

The catalysed reaction is (2R)-2,3-dihydroxy-3-methylbutanoate = 3-methyl-2-oxobutanoate + H2O. It carries out the reaction (2R,3R)-2,3-dihydroxy-3-methylpentanoate = (S)-3-methyl-2-oxopentanoate + H2O. Its pathway is amino-acid biosynthesis; L-isoleucine biosynthesis; L-isoleucine from 2-oxobutanoate: step 3/4. It participates in amino-acid biosynthesis; L-valine biosynthesis; L-valine from pyruvate: step 3/4. Its function is as follows. Functions in the biosynthesis of branched-chain amino acids. Catalyzes the dehydration of (2R,3R)-2,3-dihydroxy-3-methylpentanoate (2,3-dihydroxy-3-methylvalerate) into 2-oxo-3-methylpentanoate (2-oxo-3-methylvalerate) and of (2R)-2,3-dihydroxy-3-methylbutanoate (2,3-dihydroxyisovalerate) into 2-oxo-3-methylbutanoate (2-oxoisovalerate), the penultimate precursor to L-isoleucine and L-valine, respectively. This Brucella suis (strain ATCC 23445 / NCTC 10510) protein is Dihydroxy-acid dehydratase.